The chain runs to 322 residues: MKTTFLDFEQPIAELEAKIEELRFVQDDSALDISEEIRRLQKKSQALTKDIYAKLNAWQVSQVARHPQRPYTLDYIQGLFTDFVELHGDRAYADDAAIVGGMARFNGEPVMVIGHQKGRDTKEKIFRNFGMPRPEGYRKALRLMRLAEKFRLPILTFIDTPGAYPGIGAEERGQSEAIARNLYVMAELQTPIVCTIVGEGGSGGALAIGVGDRTLILQYSTYSVISPEGCASILWKSADKASVAAETLGITADRLKANGLVDRIIEEPLGGAQRDWDAMFQSMRRALTDTLAELRKQPTEAMLGARYQRLRAYGSFKEAPAR.

Residues 39 to 293 (RLQKKSQALT…RRALTDTLAE (255 aa)) form the CoA carboxyltransferase C-terminal domain.

The protein belongs to the AccA family. In terms of assembly, acetyl-CoA carboxylase is a heterohexamer composed of biotin carboxyl carrier protein (AccB), biotin carboxylase (AccC) and two subunits each of ACCase subunit alpha (AccA) and ACCase subunit beta (AccD).

The protein localises to the cytoplasm. It carries out the reaction N(6)-carboxybiotinyl-L-lysyl-[protein] + acetyl-CoA = N(6)-biotinyl-L-lysyl-[protein] + malonyl-CoA. It functions in the pathway lipid metabolism; malonyl-CoA biosynthesis; malonyl-CoA from acetyl-CoA: step 1/1. Its function is as follows. Component of the acetyl coenzyme A carboxylase (ACC) complex. First, biotin carboxylase catalyzes the carboxylation of biotin on its carrier protein (BCCP) and then the CO(2) group is transferred by the carboxyltransferase to acetyl-CoA to form malonyl-CoA. This chain is Acetyl-coenzyme A carboxylase carboxyl transferase subunit alpha, found in Thiobacillus denitrificans (strain ATCC 25259 / T1).